The following is a 398-amino-acid chain: S-adenosylmethionine synthase (398 aa).

Residue His17 coordinates ATP. Asp19 provides a ligand contact to Mg(2+). Residue Glu45 participates in K(+) binding. L-methionine-binding residues include Glu58 and Gln101. The segment at 101 to 111 (QSPDIAQGVDT) is flexible loop. ATP is bound by residues 176 to 178 (DGK), 243 to 244 (RF), Asp252, 258 to 259 (RK), and Lys279. Residue Asp252 coordinates L-methionine. Lys283 lines the L-methionine pocket.

This sequence belongs to the AdoMet synthase family. Homotetramer; dimer of dimers. Mg(2+) serves as cofactor. It depends on K(+) as a cofactor.

It localises to the cytoplasm. It catalyses the reaction L-methionine + ATP + H2O = S-adenosyl-L-methionine + phosphate + diphosphate. It participates in amino-acid biosynthesis; S-adenosyl-L-methionine biosynthesis; S-adenosyl-L-methionine from L-methionine: step 1/1. In terms of biological role, catalyzes the formation of S-adenosylmethionine (AdoMet) from methionine and ATP. The overall synthetic reaction is composed of two sequential steps, AdoMet formation and the subsequent tripolyphosphate hydrolysis which occurs prior to release of AdoMet from the enzyme. The sequence is that of S-adenosylmethionine synthase from Staphylococcus saprophyticus subsp. saprophyticus (strain ATCC 15305 / DSM 20229 / NCIMB 8711 / NCTC 7292 / S-41).